Here is a 218-residue protein sequence, read N- to C-terminus: Large ribosomal subunit protein uL4 (218 aa).

Positions 46-102 (ARQGTHSTKTRGEVRGGGRKPFRQKGTGRARQGSIRAPHFTGGGISHGPKPRDYSQR) are disordered. Positions 62-73 (GGRKPFRQKGTG) are enriched in basic residues.

This sequence belongs to the universal ribosomal protein uL4 family. As to quaternary structure, part of the 50S ribosomal subunit.

One of the primary rRNA binding proteins, this protein initially binds near the 5'-end of the 23S rRNA. It is important during the early stages of 50S assembly. It makes multiple contacts with different domains of the 23S rRNA in the assembled 50S subunit and ribosome. In terms of biological role, forms part of the polypeptide exit tunnel. This is Large ribosomal subunit protein uL4 from Corynebacterium glutamicum (strain R).